Here is a 426-residue protein sequence, read N- to C-terminus: MAIEHEDDLKDEKNPRPLDEDDIALLKTYGLGPYSASIKKVEKEIKDMSKKVNDLIGIKESDTGLAAPSQWDLVSDKQMMQEEQPLQVARCTKIINPNTEDAKYVINVKQIAKFVVGLGDKVSPTDIEEGMRVGVDRNKYQIQIPLPPKIDPSVTMMTVEEKPDVTYNDVGGCKEQIEKMREVVELPMLHPEKFVKLGIDPPKGVLCYGPPGTGKTLLARAVANRTDACFIRVIGSELVQKYVGEGARMVRELFQMARSKKACIVFFDEVDAIGGARFDDGVGGDNEVQRTMLEIVNQLDGFDARGNIKVLMATNRPDTLDPALLRPGRLDRKVEFGLPDLEGRTQIFKIHTRTMNCERDIRFELLARLCPNSTGADIRSVCTEAGMYAIRARRKTVTEKDFLDAVNKVIKGYQKFSATPKYMVYN.

Residue 209-216 (GPPGTGKT) participates in ATP binding.

Belongs to the AAA ATPase family.

It localises to the cytoplasm. Its subcellular location is the nucleus. Its function is as follows. The 26S proteasome is involved in the ATP-dependent degradation of ubiquitinated proteins. The regulatory (or ATPase) complex confers ATP dependency and substrate specificity to the 26S complex. The sequence is that of 26S proteasome regulatory subunit 7 (RPT1) from Spinacia oleracea (Spinach).